Consider the following 163-residue polypeptide: uncharacterized protein (163 aa).

This is an uncharacterized protein from Mycoplasma pneumoniae (strain ATCC 29342 / M129 / Subtype 1) (Mycoplasmoides pneumoniae).